The chain runs to 175 residues: Sec-independent protein translocase protein TatB (175 aa).

A helical membrane pass occupies residues 1–21 (MLDLGLSKMALIGVVALVVLG). Disordered regions lie at residues 96-115 (VSPGGSAAADAPDGPSAASG) and 153-175 (VQSGAARVARHRPASLRRPARFL). Residues 160-175 (VARHRPASLRRPARFL) show a composition bias toward basic residues.

It belongs to the TatB family. As to quaternary structure, the Tat system comprises two distinct complexes: a TatABC complex, containing multiple copies of TatA, TatB and TatC subunits, and a separate TatA complex, containing only TatA subunits. Substrates initially bind to the TatABC complex, which probably triggers association of the separate TatA complex to form the active translocon.

It localises to the cell inner membrane. Part of the twin-arginine translocation (Tat) system that transports large folded proteins containing a characteristic twin-arginine motif in their signal peptide across membranes. Together with TatC, TatB is part of a receptor directly interacting with Tat signal peptides. TatB may form an oligomeric binding site that transiently accommodates folded Tat precursor proteins before their translocation. The sequence is that of Sec-independent protein translocase protein TatB from Burkholderia mallei (strain ATCC 23344).